A 634-amino-acid polypeptide reads, in one-letter code: tRNA uridine 5-carboxymethylaminomethyl modification enzyme MnmG (634 aa).

Residue 14-19 coordinates FAD; the sequence is GGGHAG. An NAD(+)-binding site is contributed by 279–293; the sequence is GPRYCPSIEDKVVRF.

The protein belongs to the MnmG family. In terms of assembly, homodimer. Heterotetramer of two MnmE and two MnmG subunits. It depends on FAD as a cofactor.

It is found in the cytoplasm. Functionally, NAD-binding protein involved in the addition of a carboxymethylaminomethyl (cmnm) group at the wobble position (U34) of certain tRNAs, forming tRNA-cmnm(5)s(2)U34. The sequence is that of tRNA uridine 5-carboxymethylaminomethyl modification enzyme MnmG from Xanthomonas euvesicatoria pv. vesicatoria (strain 85-10) (Xanthomonas campestris pv. vesicatoria).